Reading from the N-terminus, the 217-residue chain is PRA1 family protein B3 (217 aa).

A disordered region spans residues 1–24 (MMANPPTLPISDHSGGGSQSQQPV). Helical transmembrane passes span 76–96 (LPYF…LSLL), 98–118 (HPFS…LYLF), 138–158 (LGVL…GSLL), 162–182 (LMIG…EDLF), and 193–213 (LLSF…STPA).

The protein belongs to the PRA1 family. Interacts with PRA1B1, PRA1B2, PRA1B4, PRA1B5, PRA1B6 and PRA1E. In terms of tissue distribution, expressed in hypocotyls and shoot apex.

Its subcellular location is the endosome membrane. May be involved in both secretory and endocytic intracellular trafficking in the endosomal/prevacuolar compartments. The chain is PRA1 family protein B3 (PRA1B3) from Arabidopsis thaliana (Mouse-ear cress).